The sequence spans 123 residues: Glycine cleavage system H protein (123 aa).

In terms of domain architecture, Lipoyl-binding spans 22-104 (VATVGITSYA…FGAGWLVKVR (83 aa)). K63 carries the post-translational modification N6-lipoyllysine.

It belongs to the GcvH family. The glycine cleavage system is composed of four proteins: P, T, L and H. (R)-lipoate serves as cofactor.

In terms of biological role, the glycine cleavage system catalyzes the degradation of glycine. The H protein shuttles the methylamine group of glycine from the P protein to the T protein. This is Glycine cleavage system H protein from Clavibacter sepedonicus (Clavibacter michiganensis subsp. sepedonicus).